We begin with the raw amino-acid sequence, 865 residues long: Bifunctional uridylyltransferase/uridylyl-removing enzyme (865 aa).

The interval 1–318 is uridylyltransferase; that stretch reads MPHVDLNPLK…FPRPDSDARL (318 aa). A uridylyl-removing region spans residues 319–675; sequence IDDDFRNLRE…VRPTEHGEGL (357 aa). Positions 437 to 559 constitute an HD domain; that stretch reads VDQHTLAVVR…VGDERRLAAL (123 aa). 2 ACT domains span residues 676–762 and 789–865; these read QVMV…RLPH and RLSV…QQAA. Residues 747-767 form a disordered region; that stretch reads DPHAARHAHAPRRLPHSHARR. The span at 751–767 shows a compositional bias: basic residues; that stretch reads ARHAHAPRRLPHSHARR.

Belongs to the GlnD family. Mg(2+) is required as a cofactor.

The catalysed reaction is [protein-PII]-L-tyrosine + UTP = [protein-PII]-uridylyl-L-tyrosine + diphosphate. It catalyses the reaction [protein-PII]-uridylyl-L-tyrosine + H2O = [protein-PII]-L-tyrosine + UMP + H(+). With respect to regulation, uridylyltransferase (UTase) activity is inhibited by glutamine, while glutamine activates uridylyl-removing (UR) activity. Its function is as follows. Modifies, by uridylylation and deuridylylation, the PII regulatory proteins (GlnB and homologs), in response to the nitrogen status of the cell that GlnD senses through the glutamine level. Under low glutamine levels, catalyzes the conversion of the PII proteins and UTP to PII-UMP and PPi, while under higher glutamine levels, GlnD hydrolyzes PII-UMP to PII and UMP (deuridylylation). Thus, controls uridylylation state and activity of the PII proteins, and plays an important role in the regulation of nitrogen assimilation and metabolism. The chain is Bifunctional uridylyltransferase/uridylyl-removing enzyme from Bordetella pertussis (strain Tohama I / ATCC BAA-589 / NCTC 13251).